A 380-amino-acid polypeptide reads, in one-letter code: Cytochrome b (380 aa).

A run of 4 helical transmembrane segments spans residues 34-54, 78-99, 114-134, and 179-199; these read FGSL…LLAM, WLIR…YLHI, WNTG…GYVL, and FFAL…VHLT. Heme b-binding residues include H84 and H98. Heme b is bound by residues H183 and H197. Position 202 (H202) interacts with a ubiquinone. 4 helical membrane passes run 227-247, 289-309, 321-341, and 348-368; these read LKDI…ALFS, LGGV…PFLH, LSQL…WVGS, and FIII…ILFP.

This sequence belongs to the cytochrome b family. As to quaternary structure, the cytochrome bc1 complex contains 11 subunits: 3 respiratory subunits (MT-CYB, CYC1 and UQCRFS1), 2 core proteins (UQCRC1 and UQCRC2) and 6 low-molecular weight proteins (UQCRH/QCR6, UQCRB/QCR7, UQCRQ/QCR8, UQCR10/QCR9, UQCR11/QCR10 and a cleavage product of UQCRFS1). This cytochrome bc1 complex then forms a dimer. Heme b serves as cofactor.

Its subcellular location is the mitochondrion inner membrane. Component of the ubiquinol-cytochrome c reductase complex (complex III or cytochrome b-c1 complex) that is part of the mitochondrial respiratory chain. The b-c1 complex mediates electron transfer from ubiquinol to cytochrome c. Contributes to the generation of a proton gradient across the mitochondrial membrane that is then used for ATP synthesis. The polypeptide is Cytochrome b (MT-CYB) (Procellaria westlandica (Westland petrel)).